A 221-amino-acid chain; its full sequence is Zingipain-2 (221 aa).

Cystine bridges form between Cys-24–Cys-65 and Cys-58–Cys-98. Cys-27 is an active-site residue. Asn-99 and Asn-156 each carry an N-linked (GlcNAc...) asparagine glycan. Cys-155 and Cys-206 are oxidised to a cystine. Residue His-161 is part of the active site.

It belongs to the peptidase C1 family.

The enzyme catalyses Preferential cleavage of peptides with a proline residue at the P2 position.. In terms of biological role, cysteine proteinase with a specific activity toward peptides with a proline residue at the P2 position. The sequence is that of Zingipain-2 from Zingiber officinale (Ginger).